The primary structure comprises 270 residues: 4-hydroxy-tetrahydrodipicolinate reductase (270 aa).

NAD(+) contacts are provided by residues 8 to 13 (GALGRM), Asp-34, 102 to 104 (GTT), and 128 to 131 (SQNY). Residue His-160 is the Proton donor/acceptor of the active site. His-161 lines the (S)-2,3,4,5-tetrahydrodipicolinate pocket. The Proton donor role is filled by Lys-164. 170 to 171 (GT) contacts (S)-2,3,4,5-tetrahydrodipicolinate.

It belongs to the DapB family.

It is found in the cytoplasm. It carries out the reaction (S)-2,3,4,5-tetrahydrodipicolinate + NAD(+) + H2O = (2S,4S)-4-hydroxy-2,3,4,5-tetrahydrodipicolinate + NADH + H(+). The enzyme catalyses (S)-2,3,4,5-tetrahydrodipicolinate + NADP(+) + H2O = (2S,4S)-4-hydroxy-2,3,4,5-tetrahydrodipicolinate + NADPH + H(+). It functions in the pathway amino-acid biosynthesis; L-lysine biosynthesis via DAP pathway; (S)-tetrahydrodipicolinate from L-aspartate: step 4/4. Catalyzes the conversion of 4-hydroxy-tetrahydrodipicolinate (HTPA) to tetrahydrodipicolinate. This chain is 4-hydroxy-tetrahydrodipicolinate reductase, found in Methanococcus maripaludis (strain DSM 14266 / JCM 13030 / NBRC 101832 / S2 / LL).